The following is a 357-amino-acid chain: MSLFEVRHDWKKAEIEALFALPMNDLLFKAHTIHRESFDPNEVQISRLLSIKTGACPEDCKYCPQSARYDTGLEKERLLEIEKVLTEAKSAKAAGASRFCMGAAWRNPRDRDMPYLTQMVKDVKALGLETCMTLGMLSTEQSQKLAGAGLDYYNHNLDTSPEYYGDVITTRTYQSRLDTLSNVRASGMKVCSGGIVGMGEKASDRAGLLQQLANLEQHPDSVPINMLVKVAGTPFEKIDDLDPLEFVRTIAVARIIMPKSRVRLSAGREKMSDELQSMCFFAGANSIFYGCKLLTTANPEENDDMSLFKRLGLRPEQGPAAPVAQVATNLDQEQALIAKASALNEKATQQFYDAGAL.

A Radical SAM core domain is found at 41-268 (NEVQISRLLS…KSRVRLSAGR (228 aa)). [4Fe-4S] cluster is bound by residues Cys-56, Cys-60, and Cys-63. The [2Fe-2S] cluster site is built by Cys-100, Cys-131, Cys-191, and Arg-263.

It belongs to the radical SAM superfamily. Biotin synthase family. In terms of assembly, homodimer. Requires [4Fe-4S] cluster as cofactor. [2Fe-2S] cluster is required as a cofactor.

The enzyme catalyses (4R,5S)-dethiobiotin + (sulfur carrier)-SH + 2 reduced [2Fe-2S]-[ferredoxin] + 2 S-adenosyl-L-methionine = (sulfur carrier)-H + biotin + 2 5'-deoxyadenosine + 2 L-methionine + 2 oxidized [2Fe-2S]-[ferredoxin]. Its pathway is cofactor biosynthesis; biotin biosynthesis; biotin from 7,8-diaminononanoate: step 2/2. Functionally, catalyzes the conversion of dethiobiotin (DTB) to biotin by the insertion of a sulfur atom into dethiobiotin via a radical-based mechanism. In Shewanella denitrificans (strain OS217 / ATCC BAA-1090 / DSM 15013), this protein is Biotin synthase.